A 460-amino-acid chain; its full sequence is Polygalacturonase (460 aa).

A signal peptide spans 1–26; sequence MALKTQLLWSFVVVFVVSFSTTSCSG. The N-linked (GlcNAc...) asparagine glycan is linked to Asn-280. Asp-292 (proton donor) is an active-site residue. The active site involves His-315. An N-linked (GlcNAc...) asparagine glycan is attached at Asn-421.

Belongs to the glycosyl hydrolase 28 family.

It localises to the secreted. It is found in the cell wall. It carries out the reaction (1,4-alpha-D-galacturonosyl)n+m + H2O = (1,4-alpha-D-galacturonosyl)n + (1,4-alpha-D-galacturonosyl)m.. In terms of biological role, acts in concert with the pectinesterase, in the ripening process. Is involved in cell wall metabolism, specifically in polyuronide degradation. This Malus domestica (Apple) protein is Polygalacturonase.